A 1005-amino-acid chain; its full sequence is Helicase-like transcription factor (1005 aa).

Arginine 27 is subject to Omega-N-methylarginine. A DNA-binding region spans residues 38 to 287 (EFQDIIPPDD…FSEKDQPENV (250 aa)). Lysine 112 participates in a covalent cross-link: Glycyl lysine isopeptide (Lys-Gly) (interchain with G-Cter in SUMO2). At tyrosine 195 the chain carries Phosphotyrosine; by JAK2. Residue lysine 211 forms a Glycyl lysine isopeptide (Lys-Gly) (interchain with G-Cter in SUMO2) linkage. 294–301 (DDMGLGKT) contributes to the ATP binding site. Positions 325–361 (KNQVKKECNSSESDKPGRKDTIKKTDGLSKEGSRYSE) are enriched in basic and acidic residues. The tract at residues 325-385 (KNQVKKECNS…SELSSSQPKR (61 aa)) is disordered. A compositionally biased stretch (polar residues) spans 373–382 (YSMSELSSSQ). Phosphoserine is present on residues serine 395, serine 396, and serine 398. Residues 427–603 (GPSKIKEDTA…WSLLSFLKLK (177 aa)) enclose the Helicase ATP-binding domain. Residues 554–557 (DEGH) carry the DEGH box motif. The residue at position 733 (threonine 733) is a Phosphothreonine. An RING-type zinc finger spans residues 757 to 798 (CAICLDSLTVPVITHCAHVFCKPCICQCIQNEQPHAKCPLCR). Required for interaction with the RFBP isoform of ATP11B regions lie at residues 767-772 (PVITHC) and 791-796 (HAKCPL). The region spanning 834 to 999 (ALMHALIDLR…EMKQAKINEI (166 aa)) is the Helicase C-terminal domain. The segment at 922 to 1005 (SRVFLMDPAW…INEIRTLIDL (84 aa)) is interaction with SP1 and SP3.

This sequence belongs to the SNF2/RAD54 helicase family. RAD16 subfamily. In terms of assembly, interacts with SP1 and SP3 independently of DNA; the interaction with these transcriptional factors may be required for basal transcription of target genes. Interacts (via the RING-finger) with isoform RFBP of ATP11B. Progesterone-dependent isoform 1 interacts with EGR1; the interaction requires prior binding to DNA and represses c-Rel via a DNA looping mechanism. Interacts with GATA4. Interacts with PCNA; the interaction promotes polyubiquitination of PCNA through association with the UBE2B-RAD18 and UBE2V2-UBE2N ubiquitin ligase complexes. Interacts with RAD18, SHPRH, UBE2V2 and UBE2N. In terms of processing, phosphorylated on serine, threonine, and tyrosine residues. Tyr-195 phosphorylation is catalyzed by JAK2 in response to prolactin treatment. It is required for DNA binding. Isoform 1 is expressed preferentially in bladder, cervix, diaphragm, duodenum, epididymis, heart, kidney, liver, lung, ovary (granulosa cells), prostate, spleen, testis (predominantly in the Sertoli cells of the seminiferous tubules) and vagina. Isoform 2 is expressed preferentially in lactating mammary gland and uterine endometrium.

The protein resides in the cytoplasm. It localises to the nucleus. The protein localises to the nucleolus. It is found in the nucleoplasm. The catalysed reaction is S-ubiquitinyl-[E2 ubiquitin-conjugating enzyme]-L-cysteine + [acceptor protein]-L-lysine = [E2 ubiquitin-conjugating enzyme]-L-cysteine + N(6)-ubiquitinyl-[acceptor protein]-L-lysine.. Its pathway is protein modification; protein ubiquitination. Has both helicase and E3 ubiquitin ligase activities. Possesses intrinsic ATP-dependent nucleosome-remodeling activity. This activity may be required for transcriptional activation or repression of specific target promoters. These may include the SERPINE1, to which this protein can bind directly. Mediates repression by c-Rel through a DNA-looping mechanism. Plays a role in error-free postreplication repair (PRR) of damaged DNA and maintains genomic stability through acting as a ubiquitin ligase for 'Lys-63'-linked polyubiquitination of chromatin-bound PCNA. Transcriptional regulator that mediates the ability of prolactin to augment progesterone-dependent transcription of the SCGB1A1/uteroglobin gene through a bipartite progesterone receptor half-site/overlapping Y-box combination (-38/-26) where progesterone activation is attenuated by nuclear factor Y binding. Regulation also involves two GC-rich sequences in the proximal promoter (positions -162/+90) and a RUSH/SMARCA3 site (positions -616/-611) in the 5'-untranslated region. This Oryctolagus cuniculus (Rabbit) protein is Helicase-like transcription factor (HLTF).